A 323-amino-acid polypeptide reads, in one-letter code: Mas-related G-protein coupled receptor member B4 (323 aa).

Topologically, residues 1-34 (MSPTTQAWSINNTVVKENYYTEILSCITTFNTLN) are extracellular. Residue Asn-11 is glycosylated (N-linked (GlcNAc...) asparagine). The chain crosses the membrane as a helical span at residues 35-55 (FLIVIISVVGMAGNATVLWLL). Topologically, residues 56-63 (GFHMHRNA) are cytoplasmic. A helical transmembrane segment spans residues 64–84 (FSVYVLNLAGADFLYLCAQTV). Over 85–98 (YSLECVLQFDNSYF) the chain is Extracellular. The helical transmembrane segment at 99 to 119 (YFLLTILMFNYLAGFCMIAAI) threads the bilayer. The Cytoplasmic segment spans residues 120–147 (STERCLSVTWPIWYHCQRPRHTSATVCA). A helical membrane pass occupies residues 148–168 (LFWAFSLLLSLLLGQGCGFLF). The Extracellular portion of the chain corresponds to 169-180 (SKFDYSFCRYCN). The helical transmembrane segment at 181–201 (FIATAFLIVIFMVLFVSSLAL) threads the bilayer. Residues 202 to 224 (LAKIICGSHRIPVTRFYVTIALT) lie on the Cytoplasmic side of the membrane. A helical transmembrane segment spans residues 225-245 (VLVFIFFGLPIGICVFLLPWI). Over 246–255 (HMMLSSFFYE) the chain is Extracellular. Residues 256–276 (MVTLLSCVNSCANPIIYFFVG) form a helical membrane-spanning segment. Residues 277-323 (SIRHHRLQRQTLKLLLQRAMQDTPEEEGGERGPSQKSEDLEVVRCSS) lie on the Cytoplasmic side of the membrane. A disordered region spans residues 298 to 323 (DTPEEEGGERGPSQKSEDLEVVRCSS). Over residues 312–323 (KSEDLEVVRCSS) the composition is skewed to basic and acidic residues.

This sequence belongs to the G-protein coupled receptor 1 family. Mas subfamily. Expressed strongly in newborn dorsal root ganglia, adult dorsal root ganglia and trigeminal ganlia.

The protein localises to the membrane. In terms of biological role, orphan receptor. Probably involved in the function of nociceptive neurons. May regulate nociceptor function and/or development, including the sensation or modulation of pain. This chain is Mas-related G-protein coupled receptor member B4 (Mrgprb4), found in Rattus norvegicus (Rat).